The following is a 698-amino-acid chain: Serine/threonine-protein kinase Nek8 (698 aa).

The Protein kinase domain maps to 4-258; sequence YERIRVVGRG…LSHIMAQPLC (255 aa). ATP contacts are provided by residues 10 to 18 and Lys-33; that span reads VGRGAFGIV. The active-site Proton acceptor is the Asp-128. At Thr-162 the chain carries Phosphothreonine; by autocatalysis. Residues 281–307 form a disordered region; the sequence is LTPGTPMAPGSTGSRATSARCRGVPRG. RCC1 repeat units lie at residues 415 to 466, 467 to 518, 520 to 571, 585 to 636, and 638 to 689; these read RGII…ALSA, DGEL…ILTS, GRVL…TLLC, SGAC…AIGA, and GEVY…LAVR.

This sequence belongs to the protein kinase superfamily. NEK Ser/Thr protein kinase family. NIMA subfamily. In terms of assembly, interacts with PKD2; may regulate PKD2 targeting to the cilium. Interacts with ANKS6. Component of a complex containing at least ANKS6, INVS, NEK8 and NPHP3. ANKS6 may organize complex assembly by linking INVS and NPHP3 to NEK8 and INVS may target it to the proximal ciliary axoneme. Interacts with ANKS3. It depends on Mg(2+) as a cofactor.

The protein localises to the cytoplasm. It localises to the cytoskeleton. The protein resides in the cell projection. Its subcellular location is the cilium. It is found in the cilium axoneme. The protein localises to the microtubule organizing center. It localises to the centrosome. It carries out the reaction L-seryl-[protein] + ATP = O-phospho-L-seryl-[protein] + ADP + H(+). The catalysed reaction is L-threonyl-[protein] + ATP = O-phospho-L-threonyl-[protein] + ADP + H(+). Its function is as follows. Required for renal tubular integrity. May regulate local cytoskeletal structure in kidney tubule epithelial cells. May regulate ciliary biogenesis through targeting of proteins to the cilia. Plays a role in organogenesis and is involved in the regulation of the Hippo signaling pathway. The chain is Serine/threonine-protein kinase Nek8 (Nek8) from Rattus norvegicus (Rat).